The following is a 65-amino-acid chain: MTEASAPLIDVDPRLLEVLVCPVTRGPLEYDRAKGELISRAAKLAYPIRDGVPIMLPEEARELEG.

It belongs to the UPF0434 family.

The chain is UPF0434 protein CC_0108 from Caulobacter vibrioides (strain ATCC 19089 / CIP 103742 / CB 15) (Caulobacter crescentus).